The following is a 340-amino-acid chain: Serine racemase (340 aa).

E13 contacts Mg(2+). ATP contacts are provided by S31, S32, I33, K51, and T52. Catalysis depends on K56, which acts as the Proton acceptor. N6-(pyridoxal phosphate)lysine is present on K56. Ca(2+) contacts are provided by P69 and T81. The active-site Proton acceptor is S84. Residue N86 coordinates pyridoxal 5'-phosphate. Q89 is an ATP binding site. C113 carries the S-nitrosocysteine modification. Y121 serves as a coordination point for ATP. N154 is a pyridoxal 5'-phosphate binding site. D178 is a binding site for Mg(2+). Pyridoxal 5'-phosphate is bound by residues G185, G186, G187, G188, and M189. The Mg(2+) site is built by E210, A214, D216, and N247. Residues E210, A214, D216, and N247 each coordinate Ca(2+). Residues E210, A214, and D216 each coordinate Mn(2+). Position 279 (K279) interacts with ATP. Residue S313 coordinates pyridoxal 5'-phosphate. N316 is an ATP binding site.

The protein belongs to the serine/threonine dehydratase family. Homodimer. Mg(2+) is required as a cofactor. The cofactor is Mn(2+). Requires Ca(2+) as cofactor. Pyridoxal 5'-phosphate serves as cofactor. S-nitrosylated, leading to decrease the enzyme activity. In terms of tissue distribution, expressed in the cerebellum, hippocampus, dorsolateral prefrontal cortex, and in motor neurons and glial cells of the lumbar spinal cord (at protein level). Increased in the dorsolateral prefrontal cortex of schizophrenic patients (at protein level). Brain: expressed at high levels in hippocampus and corpus callosum, intermediate levels in substantia nigra and caudate, and low levels in amygdala, thalamus, and subthalamic nuclei. Expressed in heart, skeletal muscle, kidney, and liver.

The enzyme catalyses L-serine = D-serine. It catalyses the reaction D-serine = pyruvate + NH4(+). The catalysed reaction is L-serine = pyruvate + NH4(+). With respect to regulation, allosterically activated by magnesium, and possibly also other divalent metal cations. Allosterically activated by ATP, ADP or GTP. Competitively inhibited by malonate. Inhibited by meso-tartrate and malonate. In terms of biological role, catalyzes the synthesis of D-serine from L-serine. D-serine is a key coagonist with glutamate at NMDA receptors. Has dehydratase activity towards both L-serine and D-serine. In Homo sapiens (Human), this protein is Serine racemase (SRR).